The chain runs to 255 residues: uncharacterized protein (255 aa).

2 disordered regions span residues 112–145 (CWPG…PSPG) and 157–183 (GLAE…PDAQ).

This is an uncharacterized protein from Rhodospirillum rubrum.